A 439-amino-acid polypeptide reads, in one-letter code: Serine hydroxymethyltransferase (439 aa).

(6S)-5,6,7,8-tetrahydrofolate-binding positions include Leu119 and 123–125 (GHL). At Lys228 the chain carries N6-(pyridoxal phosphate)lysine. 370 to 372 (SPF) provides a ligand contact to (6S)-5,6,7,8-tetrahydrofolate.

It belongs to the SHMT family. As to quaternary structure, homodimer. The cofactor is pyridoxal 5'-phosphate.

The protein localises to the cytoplasm. It catalyses the reaction (6R)-5,10-methylene-5,6,7,8-tetrahydrofolate + glycine + H2O = (6S)-5,6,7,8-tetrahydrofolate + L-serine. The protein operates within one-carbon metabolism; tetrahydrofolate interconversion. Its pathway is amino-acid biosynthesis; glycine biosynthesis; glycine from L-serine: step 1/1. Its function is as follows. Catalyzes the reversible interconversion of serine and glycine with tetrahydrofolate (THF) serving as the one-carbon carrier. This reaction serves as the major source of one-carbon groups required for the biosynthesis of purines, thymidylate, methionine, and other important biomolecules. Also exhibits THF-independent aldolase activity toward beta-hydroxyamino acids, producing glycine and aldehydes, via a retro-aldol mechanism. This chain is Serine hydroxymethyltransferase, found in Chlorobium phaeobacteroides (strain BS1).